Here is a 918-residue protein sequence, read N- to C-terminus: Eukaryotic translation initiation factor 3 subunit C (918 aa).

The interval 1 to 174 (MSRFFKGGSS…EEEGRRVVKS (174 aa)) is disordered. A phosphoserine mark is found at serine 10, serine 12, serine 16, serine 19, and serine 20. Composition is skewed to acidic residues over residues 36 to 47 (SSSEEESSEEES), 54 to 67 (ESSE…ESEV), and 79 to 128 (EDSE…ESDE). At threonine 667 the chain carries Phosphothreonine. Residues 681–856 (FHMHINLELL…GAIIFERVEI (176 aa)) enclose the PCI domain. A disordered region spans residues 879–918 (KLYEQKTQHTNPQENRRRDKGGSVKRRNERTENRNRSDMN). The span at 907–918 (ERTENRNRSDMN) shows a compositional bias: basic and acidic residues.

Belongs to the eIF-3 subunit C family. Component of the eukaryotic translation initiation factor 3 (eIF-3) complex. The eIF-3 complex appears to include tif32/eif3a, SPAC25G10.08/eif3b, tif33/eif3c, SPBC4C3.07/eif3f, tif35/eif3g and sum1/eif3i. This set of common subunits may also associate exclusively with either moe1/eif3d and int6/eif3e, or with SPAC821.05/eif3h and SPAC1751.03/eif3m. The eIF-3 complex may also include SPAC3A12.13c/eif3j.

It is found in the cytoplasm. In terms of biological role, component of the eukaryotic translation initiation factor 3 (eIF-3) complex, which is involved in protein synthesis of a specialized repertoire of mRNAs and, together with other initiation factors, stimulates binding of mRNA and methionyl-tRNAi to the 40S ribosome. The eIF-3 complex specifically targets and initiates translation of a subset of mRNAs involved in cell proliferation. The sequence is that of Eukaryotic translation initiation factor 3 subunit C (nip1) from Schizosaccharomyces pombe (strain 972 / ATCC 24843) (Fission yeast).